We begin with the raw amino-acid sequence, 286 residues long: D-tagatose-1,6-bisphosphate aldolase subunit KbaY (286 aa).

Asp82 serves as the catalytic Proton donor. Zn(2+)-binding residues include His83 and His180. Residue Gly181 participates in dihydroxyacetone phosphate binding. His208 serves as a coordination point for Zn(2+). Dihydroxyacetone phosphate is bound by residues 209–211 and 230–233; these read GAS and NVAT.

Belongs to the class II fructose-bisphosphate aldolase family. TagBP aldolase KbaY subfamily. As to quaternary structure, homotetramer. Forms a complex with KbaZ. Zn(2+) serves as cofactor.

It carries out the reaction D-tagatofuranose 1,6-bisphosphate = D-glyceraldehyde 3-phosphate + dihydroxyacetone phosphate. It participates in carbohydrate metabolism; D-tagatose 6-phosphate degradation; D-glyceraldehyde 3-phosphate and glycerone phosphate from D-tagatose 6-phosphate: step 2/2. Its function is as follows. Catalytic subunit of the tagatose-1,6-bisphosphate aldolase KbaYZ, which catalyzes the reversible aldol condensation of dihydroxyacetone phosphate (DHAP or glycerone-phosphate) with glyceraldehyde 3-phosphate (G3P) to produce tagatose 1,6-bisphosphate (TBP). Requires KbaZ subunit for full activity and stability. The sequence is that of D-tagatose-1,6-bisphosphate aldolase subunit KbaY from Escherichia coli O127:H6 (strain E2348/69 / EPEC).